Reading from the N-terminus, the 315-residue chain is Ribosomal protein L11 methyltransferase (315 aa).

S-adenosyl-L-methionine contacts are provided by T164, G185, D207, and N249.

Belongs to the methyltransferase superfamily. PrmA family.

It localises to the cytoplasm. The enzyme catalyses L-lysyl-[protein] + 3 S-adenosyl-L-methionine = N(6),N(6),N(6)-trimethyl-L-lysyl-[protein] + 3 S-adenosyl-L-homocysteine + 3 H(+). In terms of biological role, methylates ribosomal protein L11. The protein is Ribosomal protein L11 methyltransferase of Lactobacillus johnsonii (strain CNCM I-12250 / La1 / NCC 533).